The following is a 388-amino-acid chain: Lipid-A-disaccharide synthase (388 aa).

The protein belongs to the LpxB family.

The enzyme catalyses a lipid X + a UDP-2-N,3-O-bis[(3R)-3-hydroxyacyl]-alpha-D-glucosamine = a lipid A disaccharide + UDP + H(+). The protein operates within bacterial outer membrane biogenesis; LPS lipid A biosynthesis. Functionally, condensation of UDP-2,3-diacylglucosamine and 2,3-diacylglucosamine-1-phosphate to form lipid A disaccharide, a precursor of lipid A, a phosphorylated glycolipid that anchors the lipopolysaccharide to the outer membrane of the cell. In Sulfurihydrogenibium sp. (strain YO3AOP1), this protein is Lipid-A-disaccharide synthase.